The chain runs to 286 residues: MPSGKEIRNKIKSVENTRKITKAMEMVAASKMRKAQDRMRAARPYGEKIRRVAGNLSHALTEYRHPFLVNREQAAVGLILVTSDKGLCGGLNSNLLRVAVSKMKEFESQGKKLQATCIGNKGFGFMQRSGAKIVSHVTGLGDTPHLEKLIGAVKVQLDAYMNGEIDALYIGYTRFINTMKQEPVFEKLLPLSGDAVGSAKTKWDYVYEPEAKSVIDDLLIRYVEALIYQAVAENMASEQSARMVAMKSASDNAKTVIGDLKLVYNKARQAAITKELSEIVSGAAAV.

The protein belongs to the ATPase gamma chain family. F-type ATPases have 2 components, CF(1) - the catalytic core - and CF(0) - the membrane proton channel. CF(1) has five subunits: alpha(3), beta(3), gamma(1), delta(1), epsilon(1). CF(0) has three main subunits: a, b and c.

It is found in the cell inner membrane. Functionally, produces ATP from ADP in the presence of a proton gradient across the membrane. The gamma chain is believed to be important in regulating ATPase activity and the flow of protons through the CF(0) complex. In Dechloromonas aromatica (strain RCB), this protein is ATP synthase gamma chain.